The following is a 276-amino-acid chain: Bifunctional protein FolD (276 aa).

Residues 157–159 (NRS), S182, and I223 contribute to the NADP(+) site.

Belongs to the tetrahydrofolate dehydrogenase/cyclohydrolase family. Homodimer.

The enzyme catalyses (6R)-5,10-methylene-5,6,7,8-tetrahydrofolate + NADP(+) = (6R)-5,10-methenyltetrahydrofolate + NADPH. The catalysed reaction is (6R)-5,10-methenyltetrahydrofolate + H2O = (6R)-10-formyltetrahydrofolate + H(+). Its pathway is one-carbon metabolism; tetrahydrofolate interconversion. Its function is as follows. Catalyzes the oxidation of 5,10-methylenetetrahydrofolate to 5,10-methenyltetrahydrofolate and then the hydrolysis of 5,10-methenyltetrahydrofolate to 10-formyltetrahydrofolate. The protein is Bifunctional protein FolD of Thermoplasma acidophilum (strain ATCC 25905 / DSM 1728 / JCM 9062 / NBRC 15155 / AMRC-C165).